The sequence spans 213 residues: Small ribosomal subunit protein eS1 (213 aa).

Positions 189-213 (ARPEEVAAEEETAVDVDEEDVDVEA) are disordered. Positions 194–213 (VAAEEETAVDVDEEDVDVEA) are enriched in acidic residues.

The protein belongs to the eukaryotic ribosomal protein eS1 family.

This Haloarcula marismortui (strain ATCC 43049 / DSM 3752 / JCM 8966 / VKM B-1809) (Halobacterium marismortui) protein is Small ribosomal subunit protein eS1.